Reading from the N-terminus, the 411-residue chain is Secretion apparatus protein BsaZ (411 aa).

4 consecutive transmembrane segments (helical) span residues 28–48 (IVALIVIATGALAAPALVDLT), 80–100 (IAAPFVLLCAAAGALPSLVQS), 137–157 (ALLYVGVFALTVRVFADLYHA), and 175–195 (IVLTVRLVLLFLLCALPVLIL). The interval 341 to 411 (AANRGGPPPE…APARTGDQNA (71 aa)) is disordered. Residues 370-404 (DACADNAFPDDAPPGAAAPNAGSPDSPAPDGGAPA) show a composition bias toward low complexity.

The protein belongs to the type III secretion exporter family.

It localises to the cell membrane. Its function is as follows. Part of the bsa type III secretion system, is involved in the intracellular replication of invading bacteria inside the host cell. Probably necessary for the lysis of the vacuole membrane and escape into the host cell cytoplasm. The chain is Secretion apparatus protein BsaZ (bsaZ) from Burkholderia mallei (strain NCTC 10247).